A 403-amino-acid chain; its full sequence is Pyruvate, phosphate dikinase regulatory protein 1, chloroplastic (403 aa).

The transit peptide at 1 to 86 (MALLSAMKLQ…NTTGPMRPIE (86 aa)) directs the protein to the chloroplast. Residues 1–108 (MALLSAMKLQ…DVSSSSNGVS (108 aa)) are disordered. Low complexity-rich tracts occupy residues 17–26 (SSNLNPNSKP), 69–80 (STITNGSNNTTG), and 87–108 (SSSR…NGVS). 269–276 (GVSRTGKT) provides a ligand contact to ADP.

Belongs to the pyruvate, phosphate/water dikinase regulatory protein family. PDRP subfamily. In terms of assembly, interacts with PPDK1. As to expression, expressed in green tissues.

It is found in the plastid. The protein localises to the chloroplast stroma. It carries out the reaction N(tele)-phospho-L-histidyl/L-threonyl-[pyruvate, phosphate dikinase] + ADP = N(tele)-phospho-L-histidyl/O-phospho-L-threonyl-[pyruvate, phosphate dikinase] + AMP + H(+). It catalyses the reaction N(tele)-phospho-L-histidyl/O-phospho-L-threonyl-[pyruvate, phosphate dikinase] + phosphate + H(+) = N(tele)-phospho-L-histidyl/L-threonyl-[pyruvate, phosphate dikinase] + diphosphate. Its activity is regulated as follows. Regulated by light/dark exposure. Its function is as follows. Bifunctional serine/threonine kinase and phosphorylase involved in the dark/light-mediated regulation of PPDK by catalyzing its phosphorylation/dephosphorylation. Dark/light-induced changes in stromal concentrations of the competing ADP and Pi substrates govern the direction of the reaction. In the dark, phosphorylates the catalytic intermediate of PPDK (PPDK-HisP), inactivating it. Light exposure induces the phosphorolysis reaction that reactivates PPDK. Unlike the kinase function which can utilize either Thr or Ser as target, the phosphorylase function has a strict substrate requirement for threonyl phosphate. In Arabidopsis thaliana (Mouse-ear cress), this protein is Pyruvate, phosphate dikinase regulatory protein 1, chloroplastic (RP1).